We begin with the raw amino-acid sequence, 818 residues long: H(+)/Cl(-) exchange transporter 3 (818 aa).

At 1–125 (MESEQLFHRG…WEMTKSLYDA (125 aa)) the chain is on the cytoplasmic side. 3 consecutive short sequence motifs (di-leucine internalization motif; mediates targeting to late endosome and lysosome membranes) follow at residues 28-29 (LL), 46-47 (LL), and 71-75 (LLDLL). The helical transmembrane segment at 126 to 163 (WSGWLVVTLTGLASGALAGLIDIAADWMTDLKEGICLS) threads the bilayer. N-linked (GlcNAc...) asparagine glycosylation is present at asparagine 177. Residues 209–232 (MNYIMYIFWALSFAFLAVSLVKVF) traverse the membrane as a helical segment. The Selectivity filter part_1 signature appears at 238–242 (GSGIP). Serine 239 provides a ligand contact to chloride. The segment at residues 241–248 (IPEIKTIL) is an intramembrane region (helical). Helical transmembrane passes span 258–276 (GKWTLMIKTITLVLAVASG) and 282–301 (EGPLVHVACCCGNIFSYLFP). A Selectivity filter part_2 motif is present at residues 280–284 (GKEGP). 2 consecutive intramembrane regions (helical) follow at residues 313–325 (VLSAASAAGVSVA) and 329–337 (PIGGVLFSL). A run of 3 helical transmembrane segments spans residues 349–367 (LWRSFFAALVAAFVLRSIN), 391–416 (FPFILLGVFGGLWGAFFIRANIAWCR), and 423–443 (FGKYPVLEVIIVAAITAVIAF). Residues asparagine 451 and asparagine 479 are each glycosylated (N-linked (GlcNAc...) asparagine). The next 2 helical transmembrane spans lie at 500 to 520 (IWQLCLALIFKIIMTVFTFGI) and 525 to 544 (GLFIPSMAIGAIAGRIVGIA). Residues 525–529 (GLFIP) carry the Selectivity filter part_3 motif. Phenylalanine 527 is a binding site for chloride. 2 consecutive intramembrane regions (helical) follow at residues 572–586 (GLYAMVGAAACLGGV) and 590–601 (TVSLVVIVFELT). Positions 602–605 (GGLE) form an intramembrane region, note=Loop between two helices. A helical membrane pass occupies residues 606–624 (YIVPLMAAVMTSKWVGDAF). Over 625-818 (GREGIYEAHI…NQDPASIMFN (194 aa)) the chain is Cytoplasmic. Residue tyrosine 630 participates in chloride binding. CBS domains lie at 658–722 (MRPR…ARKK) and 755–812 (LDMS…NQDP). Residues 689 to 691 (YNG) and 796 to 799 (TKKD) contribute to the ATP site.

The protein belongs to the chloride channel (TC 2.A.49) family. ClC-3/CLCN3 subfamily. In terms of assembly, monomer and homodimer. Forms heterodimers with CLCN4. Interacts with GOPC, PDZK1 and NHERF1/EBP50. Post-translationally, N-glycosylated. Expressed primarily in tissues derived from neuroectoderm. Within the brain, its expression is particularly evident in the hippocampus, olfactory cortex, and olfactory bulb. Highly expressed in aortic and coronary vascular smooth muscle cells, and aortic endothelial cells. Also expressed in tracheal and alveolar epithelial cells, and intima and media of the pulmonary vessels. Expressed in bronchus and colon (at protein level).

Its subcellular location is the early endosome membrane. The protein resides in the late endosome membrane. It is found in the lysosome membrane. It localises to the cell membrane. The protein localises to the golgi apparatus membrane. Its subcellular location is the cell projection. The protein resides in the ruffle membrane. Functionally, strongly outwardly rectifying, electrogenic H(+)/Cl(-)exchanger which mediates the exchange of chloride ions against protons. The CLC channel family contains both chloride channels and proton-coupled anion transporters that exchange chloride or another anion for protons. The presence of conserved gating glutamate residues is typical for family members that function as antiporters. Strongly outwardly rectifying, electrogenic H(+)/Cl(-)exchanger which mediates the exchange of chloride ions against protons. This chain is H(+)/Cl(-) exchange transporter 3 (CLCN3), found in Homo sapiens (Human).